Here is a 375-residue protein sequence, read N- to C-terminus: Cyclic AMP receptor 2 (375 aa).

The Extracellular portion of the chain corresponds to 1 to 10 (MTIMSDIIAQ). Residues 11–30 (RTILLIADFSSIIGCSLVLI) traverse the membrane as a helical segment. The Cytoplasmic segment spans residues 31 to 44 (GFWRLKLLRNHITK). A helical transmembrane segment spans residues 45-65 (IISLFCATSLFKDVISTIITL). The Extracellular segment spans residues 66–82 (LYKPDQTESGFPCYLHA). A helical membrane pass occupies residues 83-108 (IVITFGSLACWLWTLMLSFSIYNLIV). Residues 109 to 119 (RREPEPERFEK) are Cytoplasmic-facing. The chain crosses the membrane as a helical span at residues 120-138 (FYFCLCYGLPLISTIVMLS). Over 139–161 (THIIQPVGGWCWIGDNYDGYRFG) the chain is Extracellular. Residues 162-180 (LFYGPFFFIWGTSAILVGL) form a helical membrane-spanning segment. Residues 181–204 (TSKYTYSVIRSSVSDNKDKHMTYQ) are Cytoplasmic-facing. S192 is modified (phosphoserine). A helical membrane pass occupies residues 205–223 (FKLINYIVVFLVCWVFAIV). Topologically, residues 224–234 (NRILNGLNQFP) are extracellular. Residues 235–259 (TVPNVLHTYFSVSHGFYASITFIYN) traverse the membrane as a helical segment. At 260–375 (NPLMWRYFGA…NNINNKNDMI (116 aa)) the chain is on the cytoplasmic side. S298 and S303 each carry phosphoserine. The tract at residues 338 to 375 (PKENENQNHHHHHHHHHHHNHYNNNNNNNNINNKNDMI) is disordered. Residues 346-358 (HHHHHHHHHHHNH) show a composition bias toward basic residues. The segment covering 359–375 (YNNNNNNNNINNKNDMI) has biased composition (low complexity).

It belongs to the G-protein coupled receptor 5 family. C-terminal Ser or Thr residues may be phosphorylated.

The protein resides in the membrane. In terms of biological role, receptor for cAMP. Coordinates the aggregation of individual cells into a multicellular organism and regulates the expression of a large number of developmentally regulated genes. The activity of this receptor is mediated by G proteins. Plays a key role during tip formation and late development; involved in cAMP-directed patterning of pre stalk cells as they sort before and during tip formation. The chain is Cyclic AMP receptor 2 (carB) from Dictyostelium discoideum (Social amoeba).